Reading from the N-terminus, the 109-residue chain is Peptide chaperone MftB (109 aa).

The protein belongs to the peptide chaperone MftB family.

Functionally, peptide chaperone involved in the biosynthesis of the enzyme cofactor mycofactocin (MFT). Binds MftA and MftC with high affinity, and is essential for MftC activity on MftA, likely via the formation of a ternary complex. The protein is Peptide chaperone MftB of Mycobacterium tuberculosis (strain ATCC 25618 / H37Rv).